A 663-amino-acid chain; its full sequence is Syntabulin (663 aa).

Disordered stretches follow at residues 1–202 and 216–267; these read MGPL…PREK and VNIH…PEQY. The tract at residues 2–417 is sufficient for interaction with KIF5B; sequence GPLRESKKEH…DTMADGLSLE (416 aa). The residue at position 50 (serine 50) is a Phosphoserine. Low complexity predominate over residues 57–73; it reads FNPSSSGRSARTVSSNS. Residues 81–97 show a composition bias toward polar residues; sequence CPSSQSVSPVKTPSDAG. Phosphoserine is present on serine 107. 3 stretches are compositionally biased toward low complexity: residues 145–158, 188–198, and 221–241; these read EADF…GSIS, SSHKPGSSPSS, and SYAP…SDCS. Residues 271–353 are a coiled coil; it reads LQQKEVTVRH…MRSSLADKDK (83 aa). Positions 310 to 417 are sufficient for interaction with STX1A; the sequence is REDWIEEECH…DTMADGLSLE (108 aa). Phosphoserine occurs at positions 396 and 555. A helical membrane pass occupies residues 606–626; that stretch reads SFLVDLLAVAAPVVPTVLWAF.

As to quaternary structure, interacts with STX1A and KIF5B. Isoform 3, isoform 4 and isoform 5 are expressed in HeLa cell line (at protein level). Isoform 3 is expressed in fetal and adult brain. Isoform 4 is expressed in numerous fetal tissues (brain, kidney, liver, lung, and thymus) and in adult brain, kidney, liver, lung, pancreas, colon, prostate, small intestine, testis and thymus. Isoform 5 is expressed in fetal brain, brain and small intestine.

Its subcellular location is the cytoplasm. The protein localises to the cytoskeleton. The protein resides in the cytoplasmic vesicle. It is found in the golgi apparatus membrane. In terms of biological role, part of a kinesin motor-adapter complex that is critical for the anterograde axonal transport of active zone components and contributes to activity-dependent presynaptic assembly during neuronal development. This chain is Syntabulin (SYBU), found in Homo sapiens (Human).